The following is a 414-amino-acid chain: Tyrosine--tRNA ligase (414 aa).

The short motif at 57–66 (PSAPDVHIGH) is the 'HIGH' region element. The 'KMSKS' region signature appears at 241 to 245 (KMSKS). ATP is bound at residue lysine 244. In terms of domain architecture, S4 RNA-binding spans 352–413 (VPLIDLLVTL…GKRKFAKLSL (62 aa)).

The protein belongs to the class-I aminoacyl-tRNA synthetase family. TyrS type 2 subfamily. In terms of assembly, homodimer.

The protein resides in the cytoplasm. The catalysed reaction is tRNA(Tyr) + L-tyrosine + ATP = L-tyrosyl-tRNA(Tyr) + AMP + diphosphate + H(+). Catalyzes the attachment of tyrosine to tRNA(Tyr) in a two-step reaction: tyrosine is first activated by ATP to form Tyr-AMP and then transferred to the acceptor end of tRNA(Tyr). The sequence is that of Tyrosine--tRNA ligase from Shouchella clausii (strain KSM-K16) (Alkalihalobacillus clausii).